Reading from the N-terminus, the 99-residue chain is NADH-quinone oxidoreductase subunit K (99 aa).

The next 3 membrane-spanning stretches (helical) occupy residues 3-23 (LVNY…TVLV), 28-48 (IIMF…FVAF), and 59-79 (VVAF…LAII).

This sequence belongs to the complex I subunit 4L family. NDH-1 is composed of 14 different subunits. Subunits NuoA, H, J, K, L, M, N constitute the membrane sector of the complex.

It is found in the cell membrane. It carries out the reaction a quinone + NADH + 5 H(+)(in) = a quinol + NAD(+) + 4 H(+)(out). Functionally, NDH-1 shuttles electrons from NADH, via FMN and iron-sulfur (Fe-S) centers, to quinones in the respiratory chain. The immediate electron acceptor for the enzyme in this species is believed to be a menaquinone. Couples the redox reaction to proton translocation (for every two electrons transferred, four hydrogen ions are translocated across the cytoplasmic membrane), and thus conserves the redox energy in a proton gradient. The polypeptide is NADH-quinone oxidoreductase subunit K (Beutenbergia cavernae (strain ATCC BAA-8 / DSM 12333 / CCUG 43141 / JCM 11478 / NBRC 16432 / NCIMB 13614 / HKI 0122)).